The primary structure comprises 165 residues: Phosphopantetheine adenylyltransferase (165 aa).

Substrate is bound at residue Thr10. Residues 10–11 and His18 each bind ATP; that span reads TF. 3 residues coordinate substrate: Lys42, Leu74, and Arg88. ATP-binding positions include 89-91, Glu99, and 124-130; these read GLR and NAFISSS.

It belongs to the bacterial CoaD family. In terms of assembly, homohexamer. Mg(2+) is required as a cofactor.

It is found in the cytoplasm. The enzyme catalyses (R)-4'-phosphopantetheine + ATP + H(+) = 3'-dephospho-CoA + diphosphate. It functions in the pathway cofactor biosynthesis; coenzyme A biosynthesis; CoA from (R)-pantothenate: step 4/5. Reversibly transfers an adenylyl group from ATP to 4'-phosphopantetheine, yielding dephospho-CoA (dPCoA) and pyrophosphate. This chain is Phosphopantetheine adenylyltransferase, found in Helicobacter hepaticus (strain ATCC 51449 / 3B1).